The sequence spans 147 residues: MRLEDLRPTPGSMKKRKRVGRGPGSGHGKTSGRGHKGQKARGTGKVHPWFEGGQTPLQRRLPKRGFKNINKKVYAVVNVKVLEEKFEANEEVTPAKLLERKIVKDMKDGIKILGDGELTKPLIVKAHAFSKSALEKIESVGGKAEVI.

Positions 1–57 are disordered; the sequence is MRLEDLRPTPGSMKKRKRVGRGPGSGHGKTSGRGHKGQKARGTGKVHPWFEGGQTPL. Residues 30–44 show a composition bias toward basic residues; sequence TSGRGHKGQKARGTG.

It belongs to the universal ribosomal protein uL15 family. In terms of assembly, part of the 50S ribosomal subunit.

Its function is as follows. Binds to the 23S rRNA. The polypeptide is Large ribosomal subunit protein uL15 (Thermotoga neapolitana (strain ATCC 49049 / DSM 4359 / NBRC 107923 / NS-E)).